Here is a 245-residue protein sequence, read N- to C-terminus: tRNA1(Val) (adenine(37)-N6)-methyltransferase (245 aa).

The protein belongs to the methyltransferase superfamily. tRNA (adenine-N(6)-)-methyltransferase family.

The protein resides in the cytoplasm. It catalyses the reaction adenosine(37) in tRNA1(Val) + S-adenosyl-L-methionine = N(6)-methyladenosine(37) in tRNA1(Val) + S-adenosyl-L-homocysteine + H(+). In terms of biological role, specifically methylates the adenine in position 37 of tRNA(1)(Val) (anticodon cmo5UAC). The protein is tRNA1(Val) (adenine(37)-N6)-methyltransferase of Shigella boydii serotype 18 (strain CDC 3083-94 / BS512).